The sequence spans 98 residues: MHKITPFLIAAVVAVIVLAVWLFKKDNKKETWFSRDLNYGKANSKIWNATVAKGLKGIANENAEIRKMYPYLGYGDFTGAICKGPNNQGCTYYANYTR.

Positions 3-23 are hydrophobic; sequence KITPFLIAAVVAVIVLAVWLF.

In terms of assembly, interacts with the major capsid protein.

It localises to the virion. One of the minor capsid proteins that constitute a network internal to the major capsid proteins and outside the lipid membrane. The minor capsid protein P13 does not serve a cross-linking function between neighboring capsomers, it may play a role in the viral capsid assembly. The protein is Minor capsid protein P13 of Chlorella (PBCV-1).